The chain runs to 131 residues: Profilin-2 (131 aa).

The protein belongs to the profilin family. In terms of assembly, occurs in many kinds of cells as a complex with monomeric actin in a 1:1 ratio. Expressed in vascular bundles of roots, hypocotyls, cotyledons, leaves, sepals, petals, stamen filaments and stalks of developing seeds. Expressed in leaf epidermal cells, trichomes and stem epidermal cells. Detected in phloem exudates (at protein level).

It is found in the cytoplasm. The protein localises to the cytoskeleton. The protein resides in the endoplasmic reticulum. It localises to the cytosol. Its subcellular location is the nucleus. Binds to actin monomers and regulates the organization of the actin cytoskeleton. At high concentrations, profilin prevents the polymerization of actin, whereas it enhances it at low concentrations. At low concentrations, associates with the poly-proline motif of formins to enhance actin filament elongation rate. Binds G-actin and poly-L-proline with low affinity in vitro. Binds ACT1, ACT7 and ACT11 and inhibits actin polymerization. May be involved in the cross-talk between vesicular trafficking and the actin cytoskeleton. Inhibits cell growth of various pathogenic fungal strains. May play a role as antifungal proteins in the defense system against fungal pathogen attacks. This chain is Profilin-2, found in Arabidopsis thaliana (Mouse-ear cress).